A 333-amino-acid chain; its full sequence is Adenosine deaminase (333 aa).

Zn(2+) is bound by residues His-12 and His-14. His-14, Asp-16, and Gly-170 together coordinate substrate. Residue His-197 coordinates Zn(2+). Residue Glu-200 is the Proton donor of the active site. Position 278 (Asp-278) interacts with Zn(2+). A substrate-binding site is contributed by Asp-279.

It belongs to the metallo-dependent hydrolases superfamily. Adenosine and AMP deaminases family. Adenosine deaminase subfamily. The cofactor is Zn(2+).

It carries out the reaction adenosine + H2O + H(+) = inosine + NH4(+). The enzyme catalyses 2'-deoxyadenosine + H2O + H(+) = 2'-deoxyinosine + NH4(+). In terms of biological role, catalyzes the hydrolytic deamination of adenosine and 2-deoxyadenosine. The protein is Adenosine deaminase of Klebsiella pneumoniae subsp. pneumoniae (strain ATCC 700721 / MGH 78578).